The following is a 620-amino-acid chain: 1-deoxy-D-xylulose-5-phosphate synthase (620 aa).

Residues histidine 80 and 121-123 (GHS) contribute to the thiamine diphosphate site. Aspartate 152 is a binding site for Mg(2+). Thiamine diphosphate is bound by residues 153–154 (GA), asparagine 181, tyrosine 288, and glutamate 370. Asparagine 181 is a binding site for Mg(2+).

The protein belongs to the transketolase family. DXPS subfamily. In terms of assembly, homodimer. Mg(2+) serves as cofactor. Thiamine diphosphate is required as a cofactor.

It carries out the reaction D-glyceraldehyde 3-phosphate + pyruvate + H(+) = 1-deoxy-D-xylulose 5-phosphate + CO2. Its pathway is metabolic intermediate biosynthesis; 1-deoxy-D-xylulose 5-phosphate biosynthesis; 1-deoxy-D-xylulose 5-phosphate from D-glyceraldehyde 3-phosphate and pyruvate: step 1/1. Its function is as follows. Catalyzes the acyloin condensation reaction between C atoms 2 and 3 of pyruvate and glyceraldehyde 3-phosphate to yield 1-deoxy-D-xylulose-5-phosphate (DXP). The sequence is that of 1-deoxy-D-xylulose-5-phosphate synthase from Escherichia coli O127:H6 (strain E2348/69 / EPEC).